Here is a 567-residue protein sequence, read N- to C-terminus: Urease subunit alpha (567 aa).

Positions 129-567 constitute a Urease domain; it reads GGIDSHIHFI…LPLAQRYFLF (439 aa). Ni(2+) is bound by residues His-134, His-136, and Lys-217. Lys-217 carries the post-translational modification N6-carboxylysine. Position 219 (His-219) interacts with substrate. Residues His-246 and His-272 each contribute to the Ni(2+) site. The active-site Proton donor is His-320. Asp-360 lines the Ni(2+) pocket.

It belongs to the metallo-dependent hydrolases superfamily. Urease alpha subunit family. In terms of assembly, heterotrimer of UreA (gamma), UreB (beta) and UreC (alpha) subunits. Three heterotrimers associate to form the active enzyme. Requires Ni cation as cofactor. Carboxylation allows a single lysine to coordinate two nickel ions.

The protein resides in the cytoplasm. It catalyses the reaction urea + 2 H2O + H(+) = hydrogencarbonate + 2 NH4(+). The protein operates within nitrogen metabolism; urea degradation; CO(2) and NH(3) from urea (urease route): step 1/1. This chain is Urease subunit alpha, found in Pseudomonas entomophila (strain L48).